The primary structure comprises 292 residues: GTP cyclohydrolase FolE2 (292 aa).

Belongs to the GTP cyclohydrolase IV family.

The catalysed reaction is GTP + H2O = 7,8-dihydroneopterin 3'-triphosphate + formate + H(+). The protein operates within cofactor biosynthesis; 7,8-dihydroneopterin triphosphate biosynthesis; 7,8-dihydroneopterin triphosphate from GTP: step 1/1. Converts GTP to 7,8-dihydroneopterin triphosphate. The chain is GTP cyclohydrolase FolE2 from Staphylococcus epidermidis (strain ATCC 35984 / DSM 28319 / BCRC 17069 / CCUG 31568 / BM 3577 / RP62A).